Here is a 394-residue protein sequence, read N- to C-terminus: Nuclear pore glycoprotein p62 (394 aa).

5 tandem repeats follow at residues 22–23 (FG), 50–51 (FG), 75–76 (FG), 77–78 (FG), and 116–117 (FG). A 5 X 2 AA repeats of F-G region spans residues 22-117 (FGLSTGTPAA…GTSAAPPAFG (96 aa)). Low complexity predominate over residues 45–57 (KTTFSFGTPAPTA). Residues 45–73 (KTTFSFGTPAPTAGIGGGDADNSKAQAPP) form a disordered region. The stretch at 211-341 (SYHQLEEHIN…DNLNEANKGQ (131 aa)) forms a coiled coil.

It belongs to the nucleoporin NSP1/NUP62 family. As to expression, expressed in adult male accessory glands (at protein level).

The protein localises to the nucleus. The protein resides in the chromosome. It is found in the nucleus envelope. Its subcellular location is the nuclear pore complex. It localises to the cytoplasm. The protein localises to the cytoskeleton. The protein resides in the spindle pole. It is found in the microtubule organizing center. Its subcellular location is the centrosome. Essential component of the nuclear pore complex. The N-terminal is probably involved in nucleocytoplasmic transport. The C-terminal is involved in protein-protein interaction probably via coiled-coil formation, promotes its association with centrosomes and may function in anchorage of Nup62 to the pore complex. Binds to transcriptionally active genes. Negatively regulates chromatin attachment to the nuclear envelope, probably by preventing chromatin tethering by Nup154. This is Nuclear pore glycoprotein p62 from Drosophila melanogaster (Fruit fly).